Reading from the N-terminus, the 500-residue chain is Chromosomal replication initiator protein DnaA (500 aa).

Positions 1-81 are domain I, interacts with DnaA modulators; sequence MVNASGDPVI…LQALRTVTGE (81 aa). Residues 81 to 155 are domain II; sequence ENMFPAFKVV…QQKMNRDPET (75 aa). Residues 156-377 form a domain III, AAA+ region region; it reads HLNKNFTFDS…GALTRVTAVA (222 aa). Residues G200, G202, K203, and T204 each coordinate ATP. The segment at 378–500 is domain IV, binds dsDNA; that stretch reads SLSNQPVTRA…TVRLKQSNTN (123 aa).

Belongs to the DnaA family. As to quaternary structure, oligomerizes as a right-handed, spiral filament on DNA at oriC.

The protein resides in the cytoplasm. Its function is as follows. Plays an essential role in the initiation and regulation of chromosomal replication. ATP-DnaA binds to the origin of replication (oriC) to initiate formation of the DNA replication initiation complex once per cell cycle. Binds the DnaA box (a 9 base pair repeat at the origin) and separates the double-stranded (ds)DNA. Forms a right-handed helical filament on oriC DNA; dsDNA binds to the exterior of the filament while single-stranded (ss)DNA is stabiized in the filament's interior. The ATP-DnaA-oriC complex binds and stabilizes one strand of the AT-rich DNA unwinding element (DUE), permitting loading of DNA polymerase. After initiation quickly degrades to an ADP-DnaA complex that is not apt for DNA replication. Binds acidic phospholipids. This Bifidobacterium longum (strain DJO10A) protein is Chromosomal replication initiator protein DnaA.